The following is a 129-amino-acid chain: Small ribosomal subunit protein uS11 (129 aa).

It belongs to the universal ribosomal protein uS11 family. Part of the 30S ribosomal subunit. Interacts with proteins S7 and S18. Binds to IF-3.

Functionally, located on the platform of the 30S subunit, it bridges several disparate RNA helices of the 16S rRNA. Forms part of the Shine-Dalgarno cleft in the 70S ribosome. This Staphylococcus saprophyticus subsp. saprophyticus (strain ATCC 15305 / DSM 20229 / NCIMB 8711 / NCTC 7292 / S-41) protein is Small ribosomal subunit protein uS11.